Reading from the N-terminus, the 490-residue chain is Cysteine protease 1 (490 aa).

The signal sequence occupies residues 1–31; that stretch reads MAGGGGKSVAAALAMACFLLILAAFAPPAAA. Positions 32–154 are cleaved as a propeptide — activation peptide; that stretch reads APPDIMSIIR…EAYRHDGVEA (123 aa). 5 disulfide bridges follow: C177–C220, C211–C253, C311–C364, C395–C407, and C401–C422. The active site involves C180. Active-site residues include H317 and N339. The N-linked (GlcNAc...) asparagine glycan is linked to N356. A propeptide spans 379-490 (removed in mature form); it reads NPKPSPPSPA…FVVLNREDLV (112 aa).

Belongs to the peptidase C1 family. As to expression, highly expressed in the tapetum and developing pollen of the anther locules. Weakly expressed in root and germinating seed, hardly in the anther-less-flower and not detected in leaf.

Its function is as follows. Cysteine protease that may play a role in pollen development. May be regulated by the transcription factor UDT1 in developing anthers and play a role in tapetum development. Positively regulated by the transcription factor TDR in developing anthers and may play a role in tapetum programmed cell death (PCD). This chain is Cysteine protease 1 (CP1), found in Oryza sativa subsp. japonica (Rice).